Reading from the N-terminus, the 280-residue chain is 3-dehydroshikimate dehydratase (280 aa).

Positions 70, 102, and 142 each coordinate substrate. Position 142 (Glu142) interacts with Mn(2+). His144 acts as the Proton acceptor in catalysis. Residues Asp172 and His175 each coordinate substrate. Position 172 (Asp172) interacts with Mn(2+). His198 serves as a coordination point for Mn(2+). Tyr217 and Glu253 together coordinate substrate. Glu253 contributes to the Mn(2+) binding site.

Homodimer. Mn(2+) serves as cofactor.

The catalysed reaction is 3-dehydroshikimate = 3,4-dihydroxybenzoate + H2O. Its pathway is aromatic compound metabolism; 3,4-dihydroxybenzoate biosynthesis; 3,4-dihydroxybenzoate from 3-dehydroquinate: step 2/2. It participates in siderophore biosynthesis; petrobactin biosynthesis. In terms of biological role, involved in the biosynthesis of petrobactin, a catecholate siderophore that functions in both iron acquisition and virulence. Catalyzes the conversion of 3-dehydroshikimate to 3,4-dihydroxybenzoate (3,4-DHBA). This chain is 3-dehydroshikimate dehydratase, found in Bacillus anthracis.